Consider the following 1968-residue polypeptide: Signal element on autosome protein 2 (1968 aa).

Low complexity predominate over residues 72-88 (TSSSFSSSLATTTTTSS). Disordered stretches follow at residues 72 to 252 (TSSS…TPTQ) and 271 to 364 (QVQQ…VQEQ). Residues 107–119 (SHHHPSSSHHHHP) are compositionally biased toward basic residues. Composition is skewed to low complexity over residues 120–134 (GQQQ…SHLQ), 144–165 (HPYY…YGQA), 219–232 (DQPS…LPPL), and 298–338 (LSSI…SSSS). The span at 346–362 (PNASSSSLIKRQSQDVQ) shows a compositional bias: polar residues. The C2H2-type 1 zinc finger occupies 413 to 440 (YQCPNCNRNLANARNLQRHRQTCGSAQH). Disordered stretches follow at residues 451–499 (RSPP…LYSP) and 538–601 (WSRD…TLDP). The segment covering 452 to 467 (SPPPCASAPPVAPPTA) has biased composition (pro residues). Over residues 472 to 482 (FQHHNSTGNLT) the composition is skewed to polar residues. Over residues 483 to 498 (LSYSSSSSRHQSSLYS) the composition is skewed to low complexity. Residues 570-594 (PLHHLDSFDSADHRKETPRECHEPD) are compositionally biased toward basic and acidic residues. The C2H2-type 2; degenerate zinc finger occupies 651–672 (FTCEACKKSVSSERSLRRHYNT). Disordered regions lie at residues 681-712 (AASG…GPEK) and 785-854 (VTSA…TGNP). Residues 690-702 (TTKRKPATKRPSK) show a composition bias toward basic residues. Residues 794-804 (HQLPHQQPQQQ) show a composition bias toward low complexity. The segment covering 812–824 (LLNEQDESADDDG) has biased composition (acidic residues). Residues 827 to 851 (RSSSGTVSNSTTTTTTATTTSSKST) show a composition bias toward low complexity. The C2H2-type 3; degenerate zinc-finger motif lies at 856–875 (FTCEHCARQLCSMSNLKRHR). 4 disordered regions span residues 882 to 905 (ASSS…TAPA), 975 to 1069 (GDAL…EHKN), 1083 to 1227 (RMDA…SPLD), and 1246 to 1273 (PGPL…SQQA). Composition is skewed to low complexity over residues 981–1015 (QQHQ…AGRI), 1023–1046 (ILNQ…MLNP), and 1108–1131 (PQRS…YQVQ). Residues 1136 to 1146 (PLPPMQLPPLQ) are compositionally biased toward pro residues. Positions 1147-1185 (NPHNQQQQHQMLHQSQMNYQQVQQVQQVQHVQQQQNLQN) are enriched in low complexity. Composition is skewed to polar residues over residues 1201–1211 (APGNRSRSHSN) and 1251–1273 (QGQS…SQQA). The C2H2-type 4 zinc-finger motif lies at 1274-1297 (YICPECKKTYASRKNVKRHRMAVH). 4 disordered regions span residues 1333–1478 (TPDS…ADEE), 1569–1608 (SVGL…QQQQ), 1624–1671 (HPPM…LTCS), and 1769–1822 (ADRQ…PSTN). Positions 1388–1403 (ERQEPPKKPVADDHKS) are enriched in basic and acidic residues. Composition is skewed to pro residues over residues 1407 to 1421 (PLPP…PPPY) and 1429 to 1445 (LNPP…PPLQ). Residues 1589 to 1608 (QHPQQHPQQHPQQHPQQQQQ) show a composition bias toward low complexity. Residues 1624 to 1633 (HPPMPVSQQF) show a composition bias toward polar residues. Residues 1668–1694 (LTCSGCKKILGSDYSLRRHRAGCADVQ) form a C2H2-type 5; degenerate zinc finger. Over residues 1800-1811 (SSSSSSSTSSAS) the composition is skewed to low complexity. A C2H2-type 6 zinc finger spans residues 1826–1858 (HYCQFPECGKNFSSEWNLARHTRESCKMTTRAH).

Expressed in seam cells, intestine cells, pharyngeal muscles and nerve ring neurons.

It localises to the nucleus. It is found in the cytoplasm. Its function is as follows. RNA-binding protein, which regulates the expression of proteins required to control developmental timing of events during the L2 to L3 larval stage switch. Binds to the 3'UTR of the transcript of the heterochronic protein lin-28 to post-transcriptionally negatively regulate its expression in certain tissue types in the later larval stages. During larval development, controls the timing of seam cell division and terminal differentiation into adult alae. In vitro, it can also bind to DNA through its first zinc finger. May bind directly or indirectly to the promoter of the sex-determining factor xol-1 to activate its transcription. Its activation of xol-1 transcription controls sex determination and X chromosome dosage compensation to promote male development. Through the negative regulation of lin-28 transcript, it also has a role in the fox-1-sex-1-mediated determination of sexual fate. Acts in the intestine to play a role in regulating adult lifespan. The chain is Signal element on autosome protein 2 from Caenorhabditis elegans.